A 113-amino-acid chain; its full sequence is Sperm-associated antigen 11B (113 aa).

A signal peptide spans 1–26 (MIPRLLPFFASLLFAALLFPGLSNAS). Intrachain disulfides connect C80–C108, C87–C101, and C91–C109.

This sequence belongs to the beta-defensin family.

The protein localises to the secreted. Its function is as follows. Has antimicrobial activity against E.coli. Plays a role in the defense response in the male reproductive tract, contributing to sperm maturation, storage and protection. This Mus musculus (Mouse) protein is Sperm-associated antigen 11B.